We begin with the raw amino-acid sequence, 359 residues long: Phosphoserine aminotransferase (359 aa).

L-glutamate is bound by residues Ser9 and Arg42. Pyridoxal 5'-phosphate-binding positions include 76–77, Trp102, Thr152, Asp171, and Gln194; that span reads AS. The residue at position 195 (Lys195) is an N6-(pyridoxal phosphate)lysine. 236–237 serves as a coordination point for pyridoxal 5'-phosphate; sequence NT.

This sequence belongs to the class-V pyridoxal-phosphate-dependent aminotransferase family. SerC subfamily. In terms of assembly, homodimer. Pyridoxal 5'-phosphate is required as a cofactor.

It localises to the cytoplasm. The enzyme catalyses O-phospho-L-serine + 2-oxoglutarate = 3-phosphooxypyruvate + L-glutamate. It catalyses the reaction 4-(phosphooxy)-L-threonine + 2-oxoglutarate = (R)-3-hydroxy-2-oxo-4-phosphooxybutanoate + L-glutamate. It functions in the pathway amino-acid biosynthesis; L-serine biosynthesis; L-serine from 3-phospho-D-glycerate: step 2/3. The protein operates within cofactor biosynthesis; pyridoxine 5'-phosphate biosynthesis; pyridoxine 5'-phosphate from D-erythrose 4-phosphate: step 3/5. Functionally, catalyzes the reversible conversion of 3-phosphohydroxypyruvate to phosphoserine and of 3-hydroxy-2-oxo-4-phosphonooxybutanoate to phosphohydroxythreonine. This Marinomonas sp. (strain MWYL1) protein is Phosphoserine aminotransferase.